The sequence spans 120 residues: NAD(P)H-quinone oxidoreductase subunit 3, chloroplastic (120 aa).

The next 3 helical transmembrane spans lie at 10-30 (FWAF…ISGV), 64-84 (MFAL…PWAM), and 88-108 (VLGV…IGGL).

It belongs to the complex I subunit 3 family. In terms of assembly, NDH is composed of at least 16 different subunits, 5 of which are encoded in the nucleus.

The protein resides in the plastid. It localises to the chloroplast thylakoid membrane. The enzyme catalyses a plastoquinone + NADH + (n+1) H(+)(in) = a plastoquinol + NAD(+) + n H(+)(out). It catalyses the reaction a plastoquinone + NADPH + (n+1) H(+)(in) = a plastoquinol + NADP(+) + n H(+)(out). Its function is as follows. NDH shuttles electrons from NAD(P)H:plastoquinone, via FMN and iron-sulfur (Fe-S) centers, to quinones in the photosynthetic chain and possibly in a chloroplast respiratory chain. The immediate electron acceptor for the enzyme in this species is believed to be plastoquinone. Couples the redox reaction to proton translocation, and thus conserves the redox energy in a proton gradient. In Ipomoea purpurea (Common morning glory), this protein is NAD(P)H-quinone oxidoreductase subunit 3, chloroplastic.